A 300-amino-acid chain; its full sequence is Acetaldehyde dehydrogenase (300 aa).

10–13 (SGNI) is an NAD(+) binding site. Residue cysteine 129 is the Acyl-thioester intermediate of the active site. Residues 160–168 (SAGPGTRKN) and asparagine 271 each bind NAD(+).

It belongs to the acetaldehyde dehydrogenase family.

The catalysed reaction is acetaldehyde + NAD(+) + CoA = acetyl-CoA + NADH + H(+). This chain is Acetaldehyde dehydrogenase, found in Alkalilimnicola ehrlichii (strain ATCC BAA-1101 / DSM 17681 / MLHE-1).